Reading from the N-terminus, the 236-residue chain is Uridylate kinase (236 aa).

10–11 lines the ATP pocket; that stretch reads GS. Glycine 44 contacts UMP. Residues glycine 45 and arginine 49 each contribute to the ATP site. UMP-binding positions include aspartate 66 and 114-120; that span reads ITPGQTT. 3 residues coordinate ATP: threonine 140, tyrosine 146, and aspartate 149.

Belongs to the UMP kinase family. As to quaternary structure, homohexamer.

It localises to the cytoplasm. The enzyme catalyses UMP + ATP = UDP + ADP. Its pathway is pyrimidine metabolism; CTP biosynthesis via de novo pathway; UDP from UMP (UMPK route): step 1/1. Inhibited by UTP. Functionally, catalyzes the reversible phosphorylation of UMP to UDP. This chain is Uridylate kinase, found in Methanospirillum hungatei JF-1 (strain ATCC 27890 / DSM 864 / NBRC 100397 / JF-1).